A 327-amino-acid chain; its full sequence is uncharacterized protein (327 aa).

2 disordered regions span residues 127 to 170 (LSEF…GIYR) and 298 to 327 (NFED…LKRR). A phosphoserine mark is found at S153, S154, and S309. Positions 317–327 (YRKRKKNLKRR) are enriched in basic residues.

This is an uncharacterized protein from Schizosaccharomyces pombe (strain 972 / ATCC 24843) (Fission yeast).